The chain runs to 615 residues: Pre-hexon-linking protein IIIa (615 aa).

The segment at 1–92 (MDPGLKPSSS…DLLIRVHKYN (92 aa)) is peripentonal hexon-tethering domain. Residues 124–238 (SNQVILNDFL…FTNENTFTPD (115 aa)) form a binding to hexon-linking protein region. Ser-212 is subject to Phosphoserine; by host. Residue Thr-262 is modified to Phosphothreonine; by host. A compositionally biased stretch (basic and acidic residues) spans 400–409 (EREALEEAGP). Disordered stretches follow at residues 400–473 (EREA…SVDS) and 528–615 (GERI…NGLK). Composition is skewed to low complexity over residues 419-430 (PSSSPQSSKIQS) and 451-460 (SVRSAPPSVS). Residue Ser-451 is modified to Phosphoserine; by host. Basic and acidic residues predominate over residues 539-548 (RAEIERRRIA). Low complexity predominate over residues 557-570 (PSLSSESSAPSLSS). Positions 602-615 (GNPFDYLRPRNGLK) are excised as a propeptide.

It belongs to the adenoviridae hexon-linking protein IIIa family. Interacts with hexon proteins; this interaction tethers the peripentonal hexons to hexons situated in the facet. Interacts with the penton protein (via N-terminus). Interacts with packaging protein 3; this interaction is required to promote correct genome packaging. In terms of processing, cleaved near the C-terminus by the viral protease during virion maturation to form the mature protein.

The protein resides in the virion. It localises to the host nucleus. Structural component of the virion that acts as a cement protein on the capsid exterior which mediates the interactions between the hexons, including the peripentonal hexons, and reaches all the way to the penton vertices. Two hexon linking proteins IIIa, one from each facet, stabilize the unique edge interface between a pair of facets. As the virus enters the host cell, hexon linking proteins IIIa are shed concomitant with virion acidification in the endosome. During virus assembly, seems to play a role in the serotype specificity of the packaging of viral DNA via its interaction with packaging protein 3. This chain is Pre-hexon-linking protein IIIa, found in Snake adenovirus serotype 1 (SnAdV-1).